A 296-amino-acid polypeptide reads, in one-letter code: Cleavage and polyadenylation specificity factor subunit 4 (296 aa).

5 consecutive C3H1-type zinc fingers follow at residues 35-63, 64-91, 92-119, 120-147, and 149-171; these read KSIA…RHIR, GDRT…HEYD, MTKM…HIDP, QSKV…HLRR, and LCMD…HPHF. The CCHC-type 1 zinc finger occupies 189-206; the sequence is PTCHYCGELGHKANSCKQ. The segment at 222–254 is disordered; that stretch reads HSGGHSGGYSGHSGHIEGADDMQSNHHSQPHGP. A CCHC-type 2 zinc finger spans residues 266–283; it reads ITCYKCGNKGHYANKCPK.

Component of the cleavage and polyadenylation specificity factor (CPSF) complex, composed of at least Clp, Cpsf73, Cpsf100 and Cpsf160. As to expression, during oogenesis, expression is detected in the germarium, in nurse cells, in the oocyte, and in the somatically derived follicular epithelial cells (at protein level). At oogenesis stage 12, nurse cells degenerate and their content is transferred into the oocyte. In larvae, expressed in all organs and disks (at protein level). In the larval salivary gland, expression is initially confined to cells at the anterior end but later expands throughout the entire gland (at protein level).

It is found in the nucleus. Its function is as follows. Component of the cleavage and polyadenylation specificity factor (CPSF) complex that plays a key role in pre-mRNA 3'-end formation, recognizing the AAUAAA signal sequence and interacting with poly(A) polymerase and other factors to bring about cleavage and poly(A) addition. Has endonuclease activity. Binds RNA polymers with a preference for G- and/or C-rich clusters. Binds single-stranded DNA non-specifically. The protein is Cleavage and polyadenylation specificity factor subunit 4 (Clp) of Drosophila melanogaster (Fruit fly).